We begin with the raw amino-acid sequence, 184 residues long: Large ribosomal subunit protein uL22 (184 aa).

It belongs to the universal ribosomal protein uL22 family.

The polypeptide is Large ribosomal subunit protein uL22 (RPL17) (Yarrowia lipolytica (strain CLIB 122 / E 150) (Yeast)).